The primary structure comprises 443 residues: Mitochondrial enolase superfamily member 1 (443 aa).

Substrate is bound by residues 24 to 26 (GSD) and Tyr-34. Position 148 is a phosphoserine (Ser-148). Residue Lys-220 participates in substrate binding. Lys-222 functions as the Proton donor/acceptor in the catalytic mechanism. Asp-250 serves as a coordination point for Mg(2+). Residues Asn-252, Glu-276, Glu-305, 355–357 (HAG), and Glu-386 contribute to the substrate site. Mg(2+) contacts are provided by Glu-276 and Glu-305. The active site involves His-355.

This sequence belongs to the mandelate racemase/muconate lactonizing enzyme family. ENOSF1 subfamily. The cofactor is Mg(2+). Post-translationally, could be sumoylated.

The protein resides in the mitochondrion. The enzyme catalyses L-fuconate = 2-dehydro-3-deoxy-L-fuconate + H2O. Its function is as follows. Plays a role in the catabolism of L-fucose, a sugar that is part of the carbohydrates that are attached to cellular glycoproteins. Catalyzes the dehydration of L-fuconate to 2-keto-3-deoxy-L-fuconate by the abstraction of the 2-proton to generate an enediolate intermediate that is stabilized by the magnesium ion. May down-regulate thymidylate synthase activity, possibly already at the RNA level, by promoting the degradation of TYMS mRNA via an antisense RNA-based mechanism. This is Mitochondrial enolase superfamily member 1 (ENOSF1) from Pongo abelii (Sumatran orangutan).